A 638-amino-acid polypeptide reads, in one-letter code: Chaperone protein DnaK (638 aa).

Phosphothreonine; by autocatalysis is present on Thr-197. The disordered stretch occupies residues 598–638 (QQSAPSGAAAGPDEGAPSGSGGTSGTRGGDDVIDAEFTETK). Gly residues predominate over residues 615-624 (SGSGGTSGTR). Over residues 628–638 (DVIDAEFTETK) the composition is skewed to acidic residues.

This sequence belongs to the heat shock protein 70 family.

Its function is as follows. Acts as a chaperone. In Gloeobacter violaceus (strain ATCC 29082 / PCC 7421), this protein is Chaperone protein DnaK.